The sequence spans 338 residues: DNA-directed RNA polymerase subunit alpha (338 aa).

The interval methionine 1–aspartate 233 is alpha N-terminal domain (alpha-NTD). The tract at residues isoleucine 250–leucine 338 is alpha C-terminal domain (alpha-CTD).

This sequence belongs to the RNA polymerase alpha chain family. As to quaternary structure, homodimer. The RNAP catalytic core consists of 2 alpha, 1 beta, 1 beta' and 1 omega subunit. When a sigma factor is associated with the core the holoenzyme is formed, which can initiate transcription.

It carries out the reaction RNA(n) + a ribonucleoside 5'-triphosphate = RNA(n+1) + diphosphate. DNA-dependent RNA polymerase catalyzes the transcription of DNA into RNA using the four ribonucleoside triphosphates as substrates. The chain is DNA-directed RNA polymerase subunit alpha from Syntrophotalea carbinolica (strain DSM 2380 / NBRC 103641 / GraBd1) (Pelobacter carbinolicus).